Here is a 146-residue protein sequence, read N- to C-terminus: Angiogenin (146 aa).

An N-terminal signal peptide occupies residues 1–24; it reads MVMGLGLFLLVFMLGLGLTPPTLA. Gln25 carries the pyrrolidone carboxylic acid modification. The active-site Proton acceptor is the His37. Arg45 provides a ligand contact to tRNA. 3 disulfide bridges follow: Cys50–Cys105, Cys63–Cys116, and Cys81–Cys131. A Nucleolar localization signal motif is present at residues 55–59; it reads RRRGL. TRNA is bound by residues Cys105 and Ile127. The active-site Proton donor is the His138.

Belongs to the pancreatic ribonuclease family. As to quaternary structure, homodimer. Interacts with RNH1; inhibiting ANG ribonuclease activity. Interacts with PCNA.

It localises to the secreted. The protein localises to the nucleus. It is found in the nucleolus. Its subcellular location is the cytoplasm. The protein resides in the stress granule. Its activity is regulated as follows. Has weak tRNA ribonuclease activity by itself due to partial autoinhibition by its C-terminus, which folds into a short alpha-helix that partially occludes the substrate-binding site. In absence of stress, the ribonuclease activity is inhibited by RNH1 in the cytoplasm. In response to stress, dissociates from RNH1 in the cytoplasm and associates with cytoplasmic ribosomes with vacant A-sites: ribosomes directly activate the tRNA ribonuclease activity of ANG by refolding the C-terminal alpha-helix. In response to stress, the angiogenic activity of ANG is inhibited by RNH1 in the nucleus. In terms of biological role, secreted ribonuclease that can either promote or restrict cell proliferation of target cells, depending on the context. Endocytosed in target cells via its receptor PLXNB2 and translocates to the cytoplasm or nucleus. Under stress conditions, localizes to the cytoplasm and promotes the assembly of stress granules (SGs): specifically cleaves a subset of tRNAs within anticodon loops to produce tRNA-derived stress-induced fragments (tiRNAs), resulting in translation repression and inhibition of cell proliferation. tiRNas also prevent formation of apoptosome, thereby promoting cell survival. Preferentially cleaves RNAs between a pyrimidine and an adenosine residue, suggesting that it cleaves the anticodon loop of tRNA(Ala) (32-UUAGCAU-38) after positions 33 and 36. Cleaves a subset of tRNAs, including tRNA(Ala), tRNA(Glu), tRNA(Gly), tRNA(Lys), tRNA(Val), tRNA(His), tRNA(Asp) and tRNA(Sec). Under growth conditions and in differentiated cells, translocates to the nucleus and stimulates ribosomal RNA (rRNA) transcription, including that containing the initiation site sequences of 45S rRNA, thereby promoting cell growth and proliferation. Angiogenin induces vascularization of normal and malignant tissues via its ability to promote rRNA transcription. Involved in hematopoietic stem and progenitor cell (HSPC) growth and survival by promoting rRNA transcription in growth conditions and inhibiting translation in response to stress, respectively. Mediates the crosstalk between myeloid and intestinal epithelial cells to protect the intestinal epithelial barrier integrity: secreted by myeloid cells and promotes intestinal epithelial cells proliferation and survival. Also mediates osteoclast-endothelial cell crosstalk in growing bone: produced by osteoclasts and protects the neighboring vascular cells against senescence by promoting rRNA transcription. This is Angiogenin (ANG) from Trachypithecus francoisi (Francois' leaf monkey).